Here is a 344-residue protein sequence, read N- to C-terminus: MIRVGIVGYGTIGKRIADAVVAQDDMKIAGVLKVSPDYEAKVAVSRGFPVYTLPDRVEKFKKAGIEPAGTIEDLIKASDVVVDASPEDVGRENKEKYYQRYDKPVIFQGGEEADVAEVSFNALANYEEARGKRYVRVVSCNTTGITRVLTSLTLNGVGIKKARIFIARRGADPKEHKKGPINDVVPNPATVPSHHGPDVQTILRNVDIVTMAVAVPVTIMHMHMAYIELDSAYPKDQVIEAFAKTPRIFLADVGAGFQSLAQVIEYARDLGRPRGDFPEVAVFRDSVTTHGNELYLMYGVHQESIVVPENIDAIRSIFGTLPKWRSIEKTDKSLKLTTEGKRYG.

Residues threonine 11–isoleucine 12 and glycine 110 contribute to the NAD(+) site. Position 139–141 (serine 139–asparagine 141) interacts with D-glyceraldehyde 3-phosphate. The active-site Nucleophile is cysteine 140. Position 169 (arginine 169) interacts with NAD(+). Histidine 195 to glycine 196 contributes to the D-glyceraldehyde 3-phosphate binding site. Glutamine 302 contacts NAD(+).

Belongs to the glyceraldehyde-3-phosphate dehydrogenase family. In terms of assembly, homotetramer.

The protein localises to the cytoplasm. It carries out the reaction D-glyceraldehyde 3-phosphate + phosphate + NADP(+) = (2R)-3-phospho-glyceroyl phosphate + NADPH + H(+). It catalyses the reaction D-glyceraldehyde 3-phosphate + phosphate + NAD(+) = (2R)-3-phospho-glyceroyl phosphate + NADH + H(+). The protein operates within carbohydrate degradation; glycolysis; pyruvate from D-glyceraldehyde 3-phosphate: step 1/5. The protein is Glyceraldehyde-3-phosphate dehydrogenase of Pyrobaculum neutrophilum (strain DSM 2338 / JCM 9278 / NBRC 100436 / V24Sta) (Thermoproteus neutrophilus).